A 466-amino-acid polypeptide reads, in one-letter code: Ribulose bisphosphate carboxylase large chain (466 aa).

K4 carries the N6,N6,N6-trimethyllysine modification. Substrate is bound by residues N113 and T163. K165 serves as the catalytic Proton acceptor. K167 contacts substrate. Mg(2+) is bound by residues K191, D193, and E194. The residue at position 191 (K191) is an N6-carboxylysine. Catalysis depends on H284, which acts as the Proton acceptor. Substrate contacts are provided by R285, H317, and S369.

It belongs to the RuBisCO large chain family. Type I subfamily. In terms of assembly, heterohexadecamer of 8 large chains and 8 small chains; disulfide-linked. The disulfide link is formed within the large subunit homodimers. The cofactor is Mg(2+). The disulfide bond which can form in the large chain dimeric partners within the hexadecamer appears to be associated with oxidative stress and protein turnover.

It localises to the plastid. Its subcellular location is the chloroplast. It carries out the reaction 2 (2R)-3-phosphoglycerate + 2 H(+) = D-ribulose 1,5-bisphosphate + CO2 + H2O. The catalysed reaction is D-ribulose 1,5-bisphosphate + O2 = 2-phosphoglycolate + (2R)-3-phosphoglycerate + 2 H(+). In terms of biological role, ruBisCO catalyzes two reactions: the carboxylation of D-ribulose 1,5-bisphosphate, the primary event in carbon dioxide fixation, as well as the oxidative fragmentation of the pentose substrate in the photorespiration process. Both reactions occur simultaneously and in competition at the same active site. The protein is Ribulose bisphosphate carboxylase large chain of Proboscidea louisianica (Louisiana Devil's-claw).